A 234-amino-acid chain; its full sequence is Coiled-coil domain-containing protein 194 (234 aa).

An N-terminal signal peptide occupies residues 1–42 (MAEPGPEPGRAWRVLALCGVAVFLAAAAAGGALVAWNLAASA). 2 disordered regions span residues 44 to 67 (RGPRCPEPGANATAPPGDPPPGVD) and 187 to 234 (VLEA…RARG). A coiled-coil region spans residues 66–163 (VDDLRRRLAE…TRRLDEALRR (98 aa)). Over residues 187–196 (VLEAEMSPQR) the composition is skewed to low complexity. The segment covering 197–217 (RVPRPRPRSGSRPRPSPRSRS) has biased composition (basic residues).

This Homo sapiens (Human) protein is Coiled-coil domain-containing protein 194.